A 171-amino-acid polypeptide reads, in one-letter code: Disulfide bond formation protein B (171 aa).

Over M1–A13 the chain is Cytoplasmic. Residues W14–F30 traverse the membrane as a helical segment. The Periplasmic portion of the chain corresponds to F31–L48. A disulfide bridge connects residues C40 and C43. A helical transmembrane segment spans residues A49 to H64. Over Q65–F71 the chain is Cytoplasmic. The helical transmembrane segment at L72–L89 threads the bilayer. Residues E90–Q144 lie on the Periplasmic side of the membrane. Residues C104 and C130 are joined by a disulfide bond. Residues W145–P163 traverse the membrane as a helical segment. At A164 to A171 the chain is on the cytoplasmic side.

Belongs to the DsbB family.

Its subcellular location is the cell inner membrane. In terms of biological role, required for disulfide bond formation in some periplasmic proteins. Acts by oxidizing the DsbA protein. This chain is Disulfide bond formation protein B, found in Shewanella loihica (strain ATCC BAA-1088 / PV-4).